Consider the following 516-residue polypeptide: Extracellular endo-inulinase inu2 (516 aa).

The first 23 residues, 1 to 23 (MLNPKVAYMVWMTCLGLTLPSQA), serve as a signal peptide directing secretion. Substrate is bound by residues 41–43 (MNE) and asparagine 61. Glutamate 43 is an active-site residue. Residues asparagine 108 and asparagine 109 are each glycosylated (N-linked (GlcNAc...) asparagine). Aspartate 176 provides a ligand contact to substrate. An N-linked (GlcNAc...) asparagine glycan is attached at asparagine 210. Asparagine 320 contributes to the substrate binding site. A glycan (N-linked (GlcNAc...) asparagine) is linked at asparagine 372.

This sequence belongs to the glycosyl hydrolase 32 family.

The protein localises to the secreted. The catalysed reaction is Endohydrolysis of (2-&gt;1)-beta-D-fructosidic linkages in inulin.. Functionally, endo-inulinase involved in utilization of the plant storage polymer inulin, consisting of fructooligosaccharides with a degree of polymerization (DP) value from 2 to 60. The chain is Extracellular endo-inulinase inu2 (inu2) from Aspergillus ficuum.